Consider the following 1018-residue polypeptide: Ubiquitin carboxyl-terminal hydrolase 35 (1018 aa).

One can recognise a USP domain in the interval 441–926 (IGLINLGNTC…TAYVLFYRQR (486 aa)). The Nucleophile role is filled by Cys450. Disordered regions lie at residues 544 to 566 (QKLKQSSSPSPPEEPPAPSSTSV) and 610 to 757 (RLGS…GSEG). The segment covering 552-561 (PSPPEEPPAP) has biased composition (pro residues). The residue at position 613 (Ser613) is a Phosphoserine. Basic and acidic residues-rich tracts occupy residues 673-691 (QEERIEREEEGKEERTEKE), 699-709 (STRGEGEREKE), and 718-728 (KVEKETEKEAE). Catalysis depends on His862, which acts as the Proton acceptor. The tract at residues 984 to 1011 (HWGRGFDEDKDEDEGSPGGCNPAGGNGG) is disordered. Positions 999–1011 (SPGGCNPAGGNGG) are enriched in gly residues.

This sequence belongs to the peptidase C19 family. As to quaternary structure, homodimer (via C-terminal region). Interacts with HSP90AA1. In terms of processing, ubiquitinated by CHIP/STUB1 in an HSP90-dependent manner; leading to proteasomal degradation. This ubiquitination can be reversed through auto-deubiquitinating activity. In terms of tissue distribution, expressed in testis, pancreas and skeletal muscle.

The protein localises to the cytoplasm. It localises to the mitochondrion. The catalysed reaction is Thiol-dependent hydrolysis of ester, thioester, amide, peptide and isopeptide bonds formed by the C-terminal Gly of ubiquitin (a 76-residue protein attached to proteins as an intracellular targeting signal).. Deubiquitinase that plays a role in different processes including cell cycle regulation, mitophagy or endoplasmic reticulum stress. Inhibits TNFalpha-induced NF-kappa-B activation through stabilizing TNIP2 protein via deubiquitination. Plays an essential role during mitosis by deubiquitinating and thereby regulating the levels of Aurora B/AURKB protein. In addition, regulates the protein levels of other key component of the chromosomal passenger complex (CPC) such as survivin/BIRC5 or Borealin/CDCA8 by enhancing their stability. Regulates the degradation of mitochondria through the process of autophagy termed mitophagy. This is Ubiquitin carboxyl-terminal hydrolase 35 (USP35) from Homo sapiens (Human).